A 213-amino-acid chain; its full sequence is MTDKAHQCVIIGIAGASASGKSLIASTLYRELREQVGDQHIGVIPEDGYYKDQSHLSMEERVKTNYDHPSAMDHNLLLEHLQSLKAGKPIELPLYSYTEHTRKKETVHLEPKKVIILEGILLLTDIRLRQEMNFSIFVDTPLDICLMRRMKRDVNERGRSMDSVMAQYQKTVRPMFLQFIEPSKQYADIIVPRGGKNRIAIDILKAKISQFFE.

15-22 (GASASGKS) is an ATP binding site.

This sequence belongs to the uridine kinase family.

It localises to the cytoplasm. The enzyme catalyses uridine + ATP = UMP + ADP + H(+). It carries out the reaction cytidine + ATP = CMP + ADP + H(+). It functions in the pathway pyrimidine metabolism; CTP biosynthesis via salvage pathway; CTP from cytidine: step 1/3. It participates in pyrimidine metabolism; UMP biosynthesis via salvage pathway; UMP from uridine: step 1/1. The chain is Uridine kinase from Yersinia enterocolitica serotype O:8 / biotype 1B (strain NCTC 13174 / 8081).